The chain runs to 79 residues: Exodeoxyribonuclease 7 small subunit (79 aa).

Belongs to the XseB family. In terms of assembly, heterooligomer composed of large and small subunits.

The protein localises to the cytoplasm. The catalysed reaction is Exonucleolytic cleavage in either 5'- to 3'- or 3'- to 5'-direction to yield nucleoside 5'-phosphates.. Its function is as follows. Bidirectionally degrades single-stranded DNA into large acid-insoluble oligonucleotides, which are then degraded further into small acid-soluble oligonucleotides. The chain is Exodeoxyribonuclease 7 small subunit from Geobacillus kaustophilus (strain HTA426).